Consider the following 453-residue polypeptide: MKSTFKEERIKDDSKRRDLFVFVRQTMCIAAMYPFGYYVNGSGVLAVLVRFCDLTYELFNYFVSVHIAGLYICTIYINYGQGDLDFFVNCLIQTIIYLWTIAMKLYFRRFRPGLLNTILSNINDEYETRSAVGFSFVTMAGSYRMSKLWIKTYVYCCYIGTIFWLALPIAYRDRSLPLACWYPFDYTQPGVYEVVFLLQAMGQIQVAASFASSSGLHMVLCVLISGQYDVLFCSLKNVLASSYVLMGANMTELNQLQAEQSAADVEPGQYAYSVEEETPLQELLKVGSSMDFSSAFRLSFVRCIQHHRYIVAALKKIESFYSPIWFVKIGEVTFLMCLVAFVSTKSTAANSFMRMVSLGQYLLLVLYELFIICYFADIVFQNSQRCGEALWRSPWQRHLKDVRSDYMFFMLNSRRQFQLTAGKISNLNVDRFRGTITTAFSFLTLLQKMDARE.

The Cytoplasmic portion of the chain corresponds to 1 to 28 (MKSTFKEERIKDDSKRRDLFVFVRQTMC). A helical transmembrane segment spans residues 29 to 49 (IAAMYPFGYYVNGSGVLAVLV). Residues 50–85 (RFCDLTYELFNYFVSVHIAGLYICTIYINYGQGDLD) are Extracellular-facing. Residues 86-106 (FFVNCLIQTIIYLWTIAMKLY) form a helical membrane-spanning segment. The Cytoplasmic segment spans residues 107–148 (FRRFRPGLLNTILSNINDEYETRSAVGFSFVTMAGSYRMSKL). A helical membrane pass occupies residues 149 to 169 (WIKTYVYCCYIGTIFWLALPI). The Extracellular segment spans residues 170–203 (AYRDRSLPLACWYPFDYTQPGVYEVVFLLQAMGQ). The chain crosses the membrane as a helical span at residues 204 to 224 (IQVAASFASSSGLHMVLCVLI). The Cytoplasmic portion of the chain corresponds to 225-322 (SGQYDVLFCS…ALKKIESFYS (98 aa)). A helical membrane pass occupies residues 323–343 (PIWFVKIGEVTFLMCLVAFVS). Residues 344-359 (TKSTAANSFMRMVSLG) are Extracellular-facing. Residues 360-380 (QYLLLVLYELFIICYFADIVF) traverse the membrane as a helical segment. The Cytoplasmic portion of the chain corresponds to 381–408 (QNSQRCGEALWRSPWQRHLKDVRSDYMF). A helical membrane pass occupies residues 409-429 (FMLNSRRQFQLTAGKISNLNV). The Extracellular segment spans residues 430-453 (DRFRGTITTAFSFLTLLQKMDARE).

It belongs to the insect chemoreceptor superfamily. Heteromeric odorant receptor channel (TC 1.A.69) family. Or2a subfamily. As to quaternary structure, interacts with Orco. Complexes exist early in the endomembrane system in olfactory sensory neurons (OSNs), coupling these complexes to the conserved ciliary trafficking pathway.

It localises to the cell membrane. Functionally, odorant receptor which mediates acceptance or avoidance behavior, depending on its substrates. The odorant receptor repertoire encodes a large collection of odor stimuli that vary widely in identity, intensity, and duration. May form a complex with Orco to form odorant-sensing units, providing sensitive and prolonged odorant signaling and calcium permeability. Involved in the behavioral responses to pentanol, ethyl acetate, and propyl acetate. In Drosophila melanogaster (Fruit fly), this protein is Odorant receptor 83a (Or83a).